Reading from the N-terminus, the 558-residue chain is MKNNNNKSSSSSSYDSSLSPSSSSSSHQNWLSFSLSNNNNNFNSSSNPNLTSSTSDHHHPHPSHLSLFQAFSTSPVERQDGSPGVSPSDATAVLSVYPGGPKLENFLGGGASTTTTRPMQQVQSLGGVVFSSDLQPPLHPPSAAEIYDSELKSIAASFLGNYSGGHSSEVSSVHKQQPNPLAVSEASPTPKKNVESFGQRTSIYRGVTRHRWTGRYEAHLWDNSCRREGQSRKGRQVYLGGYDKEDKAARAYDLAALKYWGPTTTTNFPISNYESELEEMKHMTRQEFVASLRRKSSGFSRGASMYRGVTRHHQHGRWQARIGRVAGNKDLYLGTFSTQEEAAEAYDIAAIKFRGLNAVTNFDISRYDVKSIASCNLPVGGLMPKPSPATAAADKTVDLSPSDSPSLTTPSLTFNVATPVNDHGGTFYHTGIPIKPDPADHYWSNIFGFQANPKAEMRPLANFGSDLHNPSPGYAIMPVMQEGENNFGGSFVGSDGYNNHSAASNPVSAIPLSSTTTMSNGNEGYGGNINWINNNISSSYQTAKSNLSVLHTPVFGLE.

The span at 1–54 shows a compositional bias: low complexity; sequence MKNNNNKSSSSSSYDSSLSPSSSSSSHQNWLSFSLSNNNNNFNSSSNPNLTSST. Disordered regions lie at residues 1 to 65, 74 to 93, and 166 to 195; these read MKNN…PSHL, SPVERQDGSPGVSPSDATAV, and HSSEVSSVHKQQPNPLAVSEASPTPKKNVE. DNA-binding regions (AP2/ERF) lie at residues 203–269 and 305–363; these read IYRG…TNFP and MYRG…TNFD. Residues 387–406 are disordered; sequence SPATAAADKTVDLSPSDSPS.

This sequence belongs to the AP2/ERF transcription factor family. AP2 subfamily. Expressed in roots, seedlings, inflorescence, and siliques. Also detected at low levels in leaves.

It is found in the nucleus. Its function is as follows. Probably acts as a transcriptional activator. Binds to the GCC-box pathogenesis-related promoter element. May be involved in the regulation of gene expression by stress factors and by components of stress signal transduction pathways. Involved in the regulation of floral organs size. The protein is AP2-like ethylene-responsive transcription factor AIL5 of Arabidopsis thaliana (Mouse-ear cress).